Reading from the N-terminus, the 373-residue chain is Queuine tRNA-ribosyltransferase (373 aa).

Asp91 acts as the Proton acceptor in catalysis. Residues 91–95 (DSGGF), Asp145, Gln187, and Gly214 each bind substrate. Residues 245–251 (GVGKPED) form an RNA binding region. The active-site Nucleophile is Asp264. The RNA binding; important for wobble base 34 recognition stretch occupies residues 269-273 (TRNAR). Cys302, Cys304, Cys307, and His333 together coordinate Zn(2+).

This sequence belongs to the queuine tRNA-ribosyltransferase family. As to quaternary structure, homodimer. Within each dimer, one monomer is responsible for RNA recognition and catalysis, while the other monomer binds to the replacement base PreQ1. Zn(2+) serves as cofactor.

It catalyses the reaction 7-aminomethyl-7-carbaguanine + guanosine(34) in tRNA = 7-aminomethyl-7-carbaguanosine(34) in tRNA + guanine. It functions in the pathway tRNA modification; tRNA-queuosine biosynthesis. Its function is as follows. Catalyzes the base-exchange of a guanine (G) residue with the queuine precursor 7-aminomethyl-7-deazaguanine (PreQ1) at position 34 (anticodon wobble position) in tRNAs with GU(N) anticodons (tRNA-Asp, -Asn, -His and -Tyr). Catalysis occurs through a double-displacement mechanism. The nucleophile active site attacks the C1' of nucleotide 34 to detach the guanine base from the RNA, forming a covalent enzyme-RNA intermediate. The proton acceptor active site deprotonates the incoming PreQ1, allowing a nucleophilic attack on the C1' of the ribose to form the product. After dissociation, two additional enzymatic reactions on the tRNA convert PreQ1 to queuine (Q), resulting in the hypermodified nucleoside queuosine (7-(((4,5-cis-dihydroxy-2-cyclopenten-1-yl)amino)methyl)-7-deazaguanosine). The protein is Queuine tRNA-ribosyltransferase of Idiomarina loihiensis (strain ATCC BAA-735 / DSM 15497 / L2-TR).